The chain runs to 908 residues: 26S proteasome non-ATPase regulatory subunit 2 (908 aa).

N-acetylmethionine is present on methionine 1. Residues 1 to 52 (MEEGGRDKAPVQPQQSPAAAPGGTDEKPSGKERRDAGDKDKEQELSEEDKQL) are disordered. A compositionally biased stretch (low complexity) spans 10–21 (PVQPQQSPAAAP). Serine 16 is subject to Phosphoserine. Threonine 24 carries the post-translational modification Phosphothreonine. Basic and acidic residues predominate over residues 24–52 (TDEKPSGKERRDAGDKDKEQELSEEDKQL). 2 positions are modified to phosphoserine: serine 29 and serine 147. A Phosphotyrosine modification is found at tyrosine 194. Phosphoserine is present on residues serine 361 and serine 363. PC repeat units lie at residues 409-442 (SAAASLGMILLWDVDGGLTQIDKYLYSSEDYIKS), 443-479 (GALLACGIVNSGVRNECDPALALLSDYVLHNSNTMRL), 480-514 (GSIFGLGLAYAGSNREDVLTLLLPVMGDSKSSMEV), 517-551 (VTALACGMIAVGSCNGDVTSTILQTIMEKSETELK), and 560-589 (LGLGLNHLGKGEAIEAILAALEVVSEPFRS). An N6-acetyllysine modification is found at lysine 551. Positions 623–643 (KEKEEDKDKKEKKDKDKKEAP) are enriched in basic and acidic residues. The interval 623–645 (KEKEEDKDKKEKKDKDKKEAPAD) is disordered. PC repeat units lie at residues 692-723 (LALALISVSNPRLNILDTLSKFSHDADPEVSY) and 742-757 (AAMLRQLAQYHAKDPN). The tract at residues 708-903 (DTLSKFSHDA…LEGFVILRKN (196 aa)) is required for interaction with UBLCP1.

Belongs to the proteasome subunit S2 family. As to quaternary structure, component of the 19S proteasome regulatory particle complex. The 26S proteasome consists of a 20S core particle (CP) and two 19S regulatory subunits (RP). The regulatory particle is made of a lid composed of 9 subunits, a base containing 6 ATPases and few additional components including PSMD2. Interacts with RPGRIP1L. Interacts with CRY1 in a KDM8-dependent manner. Interacts (via C-terminus) with phosphatase UBLCP1 (via ubiquitin-like domain); the interaction recruits UBLCP1 to the 19S regulatory particle where it dephosphorylates 19S subunit PSMC2/RPT1 which impairs PSMC2 ATPase activity and disrupts 26S proteasome assembly. In terms of tissue distribution, found in skeletal muscle, liver, heart, brain, kidney, pancreas, lung and placenta.

In terms of biological role, component of the 26S proteasome, a multiprotein complex involved in the ATP-dependent degradation of ubiquitinated proteins. This complex plays a key role in the maintenance of protein homeostasis by removing misfolded or damaged proteins, which could impair cellular functions, and by removing proteins whose functions are no longer required. Therefore, the proteasome participates in numerous cellular processes, including cell cycle progression, apoptosis, or DNA damage repair. Binds to the intracellular domain of tumor necrosis factor type 1 receptor. The binding domain of TRAP1 and TRAP2 resides outside the death domain of TNFR1. This chain is 26S proteasome non-ATPase regulatory subunit 2 (PSMD2), found in Homo sapiens (Human).